Consider the following 124-residue polypeptide: Non-specific lipid-transfer protein (124 aa).

A signal peptide spans 1 to 26; the sequence is MANSGVMKLVCLVLACMVVAAPLAEA. 4 disulfide bridges follow: Cys-30/Cys-77, Cys-40/Cys-54, Cys-55/Cys-100, and Cys-75/Cys-114.

This sequence belongs to the plant LTP family.

In terms of biological role, plant non-specific lipid-transfer proteins transfer phospholipids as well as galactolipids across membranes. May play a role in wax or cutin deposition in the cell walls of expanding epidermal cells and certain secretory tissues. This chain is Non-specific lipid-transfer protein, found in Macadamia integrifolia (Macadamia nut).